Here is a 481-residue protein sequence, read N- to C-terminus: 3-isopropylmalate dehydratase large subunit (481 aa).

3 residues coordinate [4Fe-4S] cluster: cysteine 357, cysteine 417, and cysteine 420.

This sequence belongs to the aconitase/IPM isomerase family. LeuC type 1 subfamily. In terms of assembly, heterodimer of LeuC and LeuD. [4Fe-4S] cluster serves as cofactor.

The enzyme catalyses (2R,3S)-3-isopropylmalate = (2S)-2-isopropylmalate. It participates in amino-acid biosynthesis; L-leucine biosynthesis; L-leucine from 3-methyl-2-oxobutanoate: step 2/4. Functionally, catalyzes the isomerization between 2-isopropylmalate and 3-isopropylmalate, via the formation of 2-isopropylmaleate. The sequence is that of 3-isopropylmalate dehydratase large subunit from Mycolicibacterium gilvum (strain PYR-GCK) (Mycobacterium gilvum (strain PYR-GCK)).